Here is a 115-residue protein sequence, read N- to C-terminus: NAD(P)H-quinone oxidoreductase subunit M (115 aa).

It belongs to the complex I NdhM subunit family. In terms of assembly, NDH-1 can be composed of about 15 different subunits; different subcomplexes with different compositions have been identified which probably have different functions.

The protein localises to the cellular thylakoid membrane. The catalysed reaction is a plastoquinone + NADH + (n+1) H(+)(in) = a plastoquinol + NAD(+) + n H(+)(out). The enzyme catalyses a plastoquinone + NADPH + (n+1) H(+)(in) = a plastoquinol + NADP(+) + n H(+)(out). In terms of biological role, NDH-1 shuttles electrons from an unknown electron donor, via FMN and iron-sulfur (Fe-S) centers, to quinones in the respiratory and/or the photosynthetic chain. The immediate electron acceptor for the enzyme in this species is believed to be plastoquinone. Couples the redox reaction to proton translocation, and thus conserves the redox energy in a proton gradient. Cyanobacterial NDH-1 also plays a role in inorganic carbon-concentration. This Trichodesmium erythraeum (strain IMS101) protein is NAD(P)H-quinone oxidoreductase subunit M.